The following is a 451-amino-acid chain: Chromosomal replication initiator protein DnaA (451 aa).

The domain I, interacts with DnaA modulators stretch occupies residues methionine 1 to arginine 72. The tract at residues arginine 72–histidine 108 is domain II. Residues methionine 109–serine 325 form a domain III, AAA+ region region. Residues glycine 153, glycine 155, lysine 156, and threonine 157 each contribute to the ATP site. A domain IV, binds dsDNA region spans residues serine 326–phenylalanine 451.

It belongs to the DnaA family. Oligomerizes as a right-handed, spiral filament on DNA at oriC.

The protein localises to the cytoplasm. In terms of biological role, plays an essential role in the initiation and regulation of chromosomal replication. ATP-DnaA binds to the origin of replication (oriC) to initiate formation of the DNA replication initiation complex once per cell cycle. Binds the DnaA box (a 9 base pair repeat at the origin) and separates the double-stranded (ds)DNA. Forms a right-handed helical filament on oriC DNA; dsDNA binds to the exterior of the filament while single-stranded (ss)DNA is stabiized in the filament's interior. The ATP-DnaA-oriC complex binds and stabilizes one strand of the AT-rich DNA unwinding element (DUE), permitting loading of DNA polymerase. After initiation quickly degrades to an ADP-DnaA complex that is not apt for DNA replication. Binds acidic phospholipids. The sequence is that of Chromosomal replication initiator protein DnaA from Listeria monocytogenes serotype 4b (strain CLIP80459).